The chain runs to 419 residues: Octopressin receptor (419 aa).

Residues 1 to 37 (MENFTEENLHPWITTTTRVYNNVTIFPQYDDELGKFE) lie on the Extracellular side of the membrane. 2 N-linked (GlcNAc...) asparagine glycosylation sites follow: Asn3 and Asn22. A helical membrane pass occupies residues 38 to 58 (IMVLCILCFMALFGNAVVLIV). The Cytoplasmic segment spans residues 59-80 (LRIKKTTLTRMQLLIVYLSVTD). A helical transmembrane segment spans residues 81 to 101 (ISVALFHILPTIILKINVYFL). The Extracellular segment spans residues 102-108 (GDISACR). Residues Cys107 and Cys182 are joined by a disulfide bond. The helical transmembrane segment at 109 to 129 (VYQFITVAELYASSFVLIVTA) threads the bilayer. Residues 130-153 (LDRYISICHPLAAHMWTNRRVHMT) are Cytoplasmic-facing. The chain crosses the membrane as a helical span at residues 154-174 (TALALFLALMCSLPQLDAVLV). Residues 175–192 (DFHGGKLCRPNLTTELAN) are Extracellular-facing. The N-linked (GlcNAc...) asparagine glycan is linked to Asn185. The helical transmembrane segment at 193 to 213 (IAYSWWAFCSVFFVPLLLLIF) threads the bilayer. The Cytoplasmic portion of the chain corresponds to 214-292 (FYGRICFVVW…VSKSKIKTIK (79 aa)). Residues 253-274 (SQTSSENRVKNYSDARDKDSSR) are disordered. Positions 259-274 (NRVKNYSDARDKDSSR) are enriched in basic and acidic residues. The chain crosses the membrane as a helical span at residues 293 to 313 (LTFSVVACFIICYTPFFTVLM). At 314–329 (ARTYDAELSSAQTPAL) the chain is on the extracellular side. A helical transmembrane segment spans residues 330-350 (VILSLLPSLNSCTNPWIYLAF). Topologically, residues 351-419 (SGKVWCRQQS…TTALMSSSPC (69 aa)) are cytoplasmic.

Belongs to the G-protein coupled receptor 1 family. Vasopressin/oxytocin receptor subfamily. Present in the nervous system and peripheral tissues.

The protein resides in the cell membrane. Functionally, acts as a receptor for octopressin. In Octopus vulgaris (Common octopus), this protein is Octopressin receptor.